The following is a 412-amino-acid chain: Isovaleryl-CoA dehydrogenase, mitochondrial (412 aa).

The N-terminal 25 residues, 1 to 25 (MHKLFVARSVKSALFRIKNHQKPQF), are a transit peptide targeting the mitochondrion. FAD is bound by residues 154 to 163 (LAMSEPNAGS) and 187 to 189 (WCT). Substrate is bound at residue S163. Substrate contacts are provided by residues 209-210 (SK), Y264, and 271-274 (DLER). The Proton acceptor role is filled by E273. FAD-binding positions include R299, Q310, and 367–371 (QCLGG). Substrate is bound at residue 394 to 395 (AG). FAD is bound at residue 396–398 (TSE).

Belongs to the acyl-CoA dehydrogenase family. Homotetramer. It depends on FAD as a cofactor. In terms of tissue distribution, expressed in flowers and tubers.

It is found in the mitochondrion. It catalyses the reaction 3-methylbutanoyl-CoA + oxidized [electron-transfer flavoprotein] + H(+) = 3-methylbut-2-enoyl-CoA + reduced [electron-transfer flavoprotein]. It functions in the pathway amino-acid degradation; L-leucine degradation; (S)-3-hydroxy-3-methylglutaryl-CoA from 3-isovaleryl-CoA: step 1/3. Its function is as follows. Involved in the catabolism of amino acids. Uses isovaleryl-CoA as substrate. Minor activity detected with 2-methylpalmitoyl-CoA or 2-methylbutanoyl-CoA, but no activity with short- and medium-straight chain acyl-CoA esters or with 2-methylhexanoyl-CoA. This Solanum tuberosum (Potato) protein is Isovaleryl-CoA dehydrogenase, mitochondrial (IVD).